Reading from the N-terminus, the 615-residue chain is Cysteine-rich receptor-like protein kinase 1 (615 aa).

Residues 1–28 form the signal peptide; the sequence is MQICASIAQFLAWVSFLVLLATVGSSSS. Gnk2-homologous domains lie at 29-131 and 137-237; these read SESL…DRDF and DPTF…THKF. The Extracellular segment spans residues 29 to 266; sequence SESLLNCQPL…SFFPHLSDRD (238 aa). 2 N-linked (GlcNAc...) asparagine glycosylation sites follow: Asn100 and Asn165. A helical transmembrane segment spans residues 267-287; it reads VTRLAIAAISLSILTSLGAFI. Over 288–615 the chain is Cytoplasmic; the sequence is SYRRVSRKRK…VLMPDEETRV (328 aa). The 285-residue stretch at 318–602 folds into the Protein kinase domain; the sequence is FHDSMKLGQG…FEYPKQPPFL (285 aa). Residues 324–332 and Lys346 contribute to the ATP site; that span reads LGQGGAGSV. Residue Asp443 is the Proton acceptor of the active site.

Belongs to the protein kinase superfamily. Ser/Thr protein kinase family. CRK subfamily. Expressed in the whole plant at low levels.

It localises to the membrane. It carries out the reaction L-seryl-[protein] + ATP = O-phospho-L-seryl-[protein] + ADP + H(+). It catalyses the reaction L-threonyl-[protein] + ATP = O-phospho-L-threonyl-[protein] + ADP + H(+). This is Cysteine-rich receptor-like protein kinase 1 from Arabidopsis thaliana (Mouse-ear cress).